Reading from the N-terminus, the 85-residue chain is Large ribosomal subunit protein bL27 (85 aa).

The interval 1–20 is disordered; sequence MAHKKAGGSTRNGRDSEAKR.

It belongs to the bacterial ribosomal protein bL27 family.

This chain is Large ribosomal subunit protein bL27, found in Salmonella agona (strain SL483).